The chain runs to 231 residues: Platelet-activating factor acetylhydrolase IB subunit alpha1 (231 aa).

Residue S2 is modified to N-acetylserine. A Phosphoserine modification is found at S2. Catalysis depends on residues S47, D192, and H195.

It belongs to the 'GDSL' lipolytic enzyme family. Platelet-activating factor acetylhydrolase IB beta/gamma subunits subfamily. As to quaternary structure, forms a catalytic dimer which is either homodimer (alpha1/alpha1 homodimer) or heterodimer with PAFAH1B2 (alpha1/alpha2 heterodimer). Component of the cytosolic (PAF-AH (I)) heterotetrameric enzyme, which is composed of PAFAH1B1 (beta), PAFAH1B2 (alpha2) and PAFAH1B3 (alpha1) subunits. The catalytic activity of the enzyme resides in the alpha1 (PAFAH1B3) and alpha2 (PAFAH1B2) subunits, whereas the beta subunit (PAFAH1B1) has regulatory activity. Trimer formation is not essential for the catalytic activity. Interacts with VLDLR; this interaction may modulate the Reelin pathway.

It is found in the cytoplasm. It catalyses the reaction a 1-O-alkyl-2-acetyl-sn-glycero-3-phosphocholine + H2O = a 1-O-alkyl-sn-glycero-3-phosphocholine + acetate + H(+). The enzyme catalyses 1-O-hexadecyl-2-acetyl-sn-glycero-3-phosphocholine + H2O = 1-O-hexadecyl-sn-glycero-3-phosphocholine + acetate + H(+). It carries out the reaction 1-O-hexadecyl-2-acetyl-sn-glycero-3-phosphate + H2O = 1-O-hexadecyl-sn-glycero-3-phosphate + acetate + H(+). With respect to regulation, beta subunit (PAFAH1B1) inhibits the acetylhydrolase activity of the alpha1/alpha1 catalytic homodimer. Its function is as follows. Alpha1 catalytic subunit of the cytosolic type I platelet-activating factor (PAF) acetylhydrolase (PAF-AH (I)) heterotetrameric enzyme that catalyzes the hydrolyze of the acetyl group at the sn-2 position of PAF and its analogs and modulates the action of PAF. The activity and substrate specificity of PAF-AH (I) are affected by its subunit composition. Both alpha1/alpha1 homodimer (PAFAH1B3/PAFAH1B3 homodimer) and alpha1/alpha2 heterodimer(PAFAH1B3/PAFAH1B2 heterodimer) hydrolyze 1-O-alkyl-2-acetyl-sn-glycero-3-phosphoric acid (AAGPA) more efficiently than PAF, but they have little hydrolytic activity towards 1-O-alkyl-2-acetyl-sn-glycero-3-phosphorylethanolamine (AAGPE). Plays an important role during the development of brain. This Pongo abelii (Sumatran orangutan) protein is Platelet-activating factor acetylhydrolase IB subunit alpha1.